We begin with the raw amino-acid sequence, 489 residues long: Heme-based aerotactic transducer HemAT (489 aa).

A Methyl-accepting transducer domain is found at 218–454; that stretch reads PLSSLEATSQ…EVAEMVDDVD (237 aa).

This sequence belongs to the methyl-accepting chemotaxis (MCP) protein family. In terms of assembly, homotetramer.

Its function is as follows. Heme-containing signal transducer responsible for aerotaxis, the migratory response toward or away from oxygen. The chain is Heme-based aerotactic transducer HemAT (hemAT) from Halobacterium salinarum (strain ATCC 700922 / JCM 11081 / NRC-1) (Halobacterium halobium).